The chain runs to 304 residues: uncharacterized protein (304 aa).

A signal peptide spans 1 to 25; the sequence is MVKTAMLGAVALVIALGGTCGVADA. A GP-PDE domain is found at 34–303; the sequence is PMIVAHRAGT…DSPLAAQQWR (270 aa).

This is an uncharacterized protein from Mycobacterium tuberculosis (strain CDC 1551 / Oshkosh).